Consider the following 205-residue polypeptide: Mitotic spindle assembly checkpoint protein MAD2A (205 aa).

Ala-2 is modified (N-acetylalanine). Ser-6, Ser-130, Ser-170, Ser-178, Ser-185, and Ser-195 each carry phosphoserine. Residues 14 to 197 (RGSAEIVAEF…TTIHKVNSMV (184 aa)) form the HORMA domain. Residues 195–205 (SMVAYKIPVND) are required for assuming the closed conformation and for interaction with CDC20.

Belongs to the MAD2 family. In terms of assembly, monomer and homodimer. Heterodimerizes with MAD2L1 in order to form a tetrameric MAD1L1-MAD2L1 core complex. In the closed and open conformation, interacts with MAD1L1. Formation of a heterotetrameric core complex containing two molecules each of MAD1L1 and of MAD2L1 promotes binding of another molecule of MAD2L1 to each MAD2L1, resulting in a heterohexamer. Interacts with MAD2L1BP. Interacts with ADAM17/TACE. Interacts with CDC20. Dimeric MAD2L1 in the closed conformation interacts with CDC20. Monomeric MAD2L1 in the open conformation does not interact with CDC20. CDC20 competes with MAD1L1 for MAD2L1 binding. In the closed conformation, interacts with BUB1B. Interacts with TTK. Interacts with TPR. Binds to UBD (via ubiquitin-like 1 domain) during mitosis. Interacts with isoform 1 and isoform 2 of NEK2. Interacts with HSF1; this interaction occurs in mitosis. Interacts with isoform 3 of MAD1L1; this interaction leads to the cytoplasmic sequestration of MAD2L1. In terms of processing, phosphorylated on multiple serine residues. The level of phosphorylation varies during the cell cycle and is highest during mitosis. Phosphorylation abolishes interaction with MAD1L1 and reduces interaction with CDC20. Phosphorylated by NEK2.

The protein localises to the nucleus. The protein resides in the chromosome. It is found in the centromere. It localises to the kinetochore. Its subcellular location is the cytoplasm. The protein localises to the cytoskeleton. The protein resides in the spindle pole. Component of the spindle-assembly checkpoint that prevents the onset of anaphase until all chromosomes are properly aligned at the metaphase plate. In the closed conformation (C-MAD2) forms a heterotetrameric complex with MAD1L1 at unattached kinetochores during prometaphase, the complex recruits open conformation molecules of MAD2L1 (O-MAD2) and then promotes the conversion of O-MAD2 to C-MAD2. Required for the execution of the mitotic checkpoint which monitors the process of kinetochore-spindle attachment and inhibits the activity of the anaphase promoting complex by sequestering CDC20 until all chromosomes are aligned at the metaphase plate. This is Mitotic spindle assembly checkpoint protein MAD2A (MAD2L1) from Homo sapiens (Human).